A 291-amino-acid polypeptide reads, in one-letter code: Meteorin (291 aa).

The signal sequence occupies residues 1–21 (MLVAALLCALCCGLLAASARA). 5 cysteine pairs are disulfide-bonded: Cys-28–Cys-49, Cys-80–Cys-116, Cys-169–Cys-240, Cys-172–Cys-264, and Cys-182–Cys-286.

Belongs to the meteorin family. In terms of assembly, monomer.

It is found in the secreted. Involved in both glial cell differentiation and axonal network formation during neurogenesis. Promotes astrocyte differentiation and transforms cerebellar astrocytes into radial glia. Also induces axonal extension in small and intermediate neurons of sensory ganglia by activating nearby satellite glia. This Rattus norvegicus (Rat) protein is Meteorin (Metrn).